Reading from the N-terminus, the 5082-residue chain is Malformin synthetase mlfA (5082 aa).

The interval 225–616 is adenylation 1; it reads ERHAANRPHS…CGRADTQVKL (392 aa). Positions 749-822 constitute a Carrier 1 domain; the sequence is SRLEQKIQLA…EAASLAEVQE (74 aa). The residue at position 783 (serine 783) is an O-(pantetheine 4'-phosphoryl)serine. The tract at residues 860-1291 is condensation 1; that stretch reads ENVFPCTTMQ…ALNTLSLLQA (432 aa). The tract at residues 1319 to 1708 is adenylation 2; sequence DRWVTRQPEG…GRKDTQVKLR (390 aa). The Carrier 2 domain occupies 1846-1923; it reads TPTLELERTL…QLAAEVGEPA (78 aa). Serine 1883 carries the post-translational modification O-(pantetheine 4'-phosphoryl)serine. Disordered regions lie at residues 1924-1953 and 1986-2012; these read GQSASSASSTTEEGFTFSTPDDSSTNDGVD and GGSSSNKTPSVSSSSSSSSSSKRKKNA. Composition is skewed to low complexity over residues 1926–1950 and 1988–2005; these read SASSASSTTEEGFTFSTPDDSSTND and SSSNKTPSVSSSSSSSSS. The condensation 2 stretch occupies residues 2058 to 2473; it reads EDIYPATALQ…AVSCSDKETL (416 aa). The interval 2496–2888 is adenylation 3; it reads RRTPHAPAVC…IGRRDGQLKL (393 aa). Residues 3024-3100 enclose the Carrier 3 domain; that stretch reads RPVTSQEHEM…QLICHLNTIR (77 aa). An O-(pantetheine 4'-phosphoryl)serine modification is found at serine 3061. Condensation stretches follow at residues 3117–3582 and 3603–4022; these read WVAL…TYDQ and NIYP…EHLV. The tract at residues 4047–4426 is adenylation 4; it reads HNSRQAVFDD…VGRKDNQIKF (380 aa). The Carrier 4 domain occupies 4560-4636; sequence MPSTAAERKM…DLSDQAKSLI (77 aa). Serine 4597 carries the post-translational modification O-(pantetheine 4'-phosphoryl)serine. The condensation 5 stretch occupies residues 4673–5000; the sequence is DVLPTTSFQR…LQTIVQHQNN (328 aa).

It belongs to the NRP synthetase family.

Its pathway is secondary metabolite biosynthesis. Functionally, nonribosomal peptide synthetase; part of the gene cluster that mediates the biosynthesis of malformins, cyclic pentapeptides with a disulfide bond between 2 consecutive cysteins, that show potential anti-tumor as well as antimalarial and antitrypanosomal properties. The nonribosomal peptide synthetase mlfA is responsible of the formation of the cyclic pentapeptide. The malformin biosynthesis clusters in malformin-producing fungi also contain enzymes involved in the formation of the disulfide bond between the two consecutive cysteins within malformins, in addition to additional tailoring enzymes such as methyltransferases or oxidoreductases. They are also composed of up to 4 major facilitator superfamily transporters, and transcription factors probably involved in the regulation of the expression of those clusters. The chain is Malformin synthetase mlfA from Aspergillus luchuensis (strain CBS 106.47).